The following is a 130-amino-acid chain: Cytochrome c-type biogenesis protein CcmE (130 aa).

The Cytoplasmic segment spans residues 1–7; it reads MKKKHKR. The helical; Signal-anchor for type II membrane protein transmembrane segment at 8 to 28 threads the bilayer; that stretch reads LLITSGIFCFLSCAVFFILTT. Residues 29-130 are Extracellular-facing; that stretch reads LKENISFFYT…DENYKPKVLK (102 aa). 2 residues coordinate heme: His120 and Tyr124.

Belongs to the CcmE/CycJ family.

Its subcellular location is the cell membrane. Heme chaperone required for the biogenesis of c-type cytochromes. Transiently binds heme delivered by CcmC and transfers the heme to apo-cytochromes in a process facilitated by CcmF and CcmH. This chain is Cytochrome c-type biogenesis protein CcmE, found in Wolbachia pipientis subsp. Culex pipiens (strain wPip).